A 291-amino-acid chain; its full sequence is Nucleotide-binding protein MSMEG_3079/MSMEI_3001 (291 aa).

14-21 (GLSGAGRG) contacts ATP. Residue 65 to 68 (DVRS) participates in GTP binding.

It belongs to the RapZ-like family.

Displays ATPase and GTPase activities. This is Nucleotide-binding protein MSMEG_3079/MSMEI_3001 from Mycolicibacterium smegmatis (strain ATCC 700084 / mc(2)155) (Mycobacterium smegmatis).